The following is a 606-amino-acid chain: Aspartate--tRNA(Asp/Asn) ligase (606 aa).

E187 provides a ligand contact to L-aspartate. The tract at residues 211-214 (QQFK) is aspartate. 2 residues coordinate L-aspartate: R233 and H461. 233–235 (RDE) is an ATP binding site. ATP is bound at residue E495. Residue R502 participates in L-aspartate binding. 547-550 (GLDR) is a binding site for ATP.

Belongs to the class-II aminoacyl-tRNA synthetase family. Type 1 subfamily. In terms of assembly, homodimer.

It is found in the cytoplasm. It catalyses the reaction tRNA(Asx) + L-aspartate + ATP = L-aspartyl-tRNA(Asx) + AMP + diphosphate. In terms of biological role, aspartyl-tRNA synthetase with relaxed tRNA specificity since it is able to aspartylate not only its cognate tRNA(Asp) but also tRNA(Asn). Reaction proceeds in two steps: L-aspartate is first activated by ATP to form Asp-AMP and then transferred to the acceptor end of tRNA(Asp/Asn). The sequence is that of Aspartate--tRNA(Asp/Asn) ligase from Chlorobium phaeobacteroides (strain DSM 266 / SMG 266 / 2430).